A 362-amino-acid polypeptide reads, in one-letter code: Probable S-adenosylmethionine-dependent methyltransferase At5g37970 (362 aa).

S-adenosyl-L-homocysteine-binding residues include Tyr19, Cys66, Asn71, Asp107, Ser136, and Phe137. Mg(2+)-binding residues include Asn175, Glu261, and Phe263.

This sequence belongs to the methyltransferase superfamily. Type-7 methyltransferase family. As to quaternary structure, homodimer. Mg(2+) is required as a cofactor.

The sequence is that of Probable S-adenosylmethionine-dependent methyltransferase At5g37970 from Arabidopsis thaliana (Mouse-ear cress).